The chain runs to 354 residues: Uroporphyrinogen decarboxylase (354 aa).

Substrate-binding positions include 27-31 (RQAGR), D77, Y154, T209, and H327.

Belongs to the uroporphyrinogen decarboxylase family. As to quaternary structure, homodimer.

The protein resides in the cytoplasm. The catalysed reaction is uroporphyrinogen III + 4 H(+) = coproporphyrinogen III + 4 CO2. The protein operates within porphyrin-containing compound metabolism; protoporphyrin-IX biosynthesis; coproporphyrinogen-III from 5-aminolevulinate: step 4/4. Its function is as follows. Catalyzes the decarboxylation of four acetate groups of uroporphyrinogen-III to yield coproporphyrinogen-III. In Pectobacterium carotovorum subsp. carotovorum (strain PC1), this protein is Uroporphyrinogen decarboxylase.